We begin with the raw amino-acid sequence, 151 residues long: Cytochrome c-type biogenesis protein CcmE 2 (151 aa).

The Cytoplasmic portion of the chain corresponds to Met-1–Arg-8. The helical; Signal-anchor for type II membrane protein transmembrane segment at Leu-9–Ala-29 threads the bilayer. Residues Leu-30–Gly-151 are Periplasmic-facing. Residues His-124 and Tyr-128 each coordinate heme.

This sequence belongs to the CcmE/CycJ family.

The protein resides in the cell inner membrane. Heme chaperone required for the biogenesis of c-type cytochromes. Transiently binds heme delivered by CcmC and transfers the heme to apo-cytochromes in a process facilitated by CcmF and CcmH. The polypeptide is Cytochrome c-type biogenesis protein CcmE 2 (Pseudomonas fluorescens (strain Pf0-1)).